Reading from the N-terminus, the 235-residue chain is Large ribosomal subunit protein uL1 (235 aa).

It belongs to the universal ribosomal protein uL1 family. Part of the 50S ribosomal subunit.

Functionally, binds directly to 23S rRNA. The L1 stalk is quite mobile in the ribosome, and is involved in E site tRNA release. Its function is as follows. Protein L1 is also a translational repressor protein, it controls the translation of the L11 operon by binding to its mRNA. The sequence is that of Large ribosomal subunit protein uL1 from Solidesulfovibrio magneticus (strain ATCC 700980 / DSM 13731 / RS-1) (Desulfovibrio magneticus).